The chain runs to 470 residues: MNAATKLPGELGPIHFVGIGGIGMSGIAEVLMTLGYRVQGSDAKASKITDRLVSLGATFFEGQRAQNLGDAGVVVISSAIKKGNPELEEARRRGLPVVRRAEMLAELMRLRSNIAIAGTHGKTTTTTMVATLLDKGGFDPTVINGGVIHAYGSNARAGAGEWMVVEADESDGSFNRLPATIAIVTNIDPEHMEHWGSFDALRKGFYDFVTNIPFYGLAVCCTDHPEVQALVGRVTDRRIVTFGFNAQADVRAINLRYENGTAHFDVALQGEGEGHLIEGMTLPMPGDHNVSNALAAVAVARHLGMKKDEIREALAAFGGVNRRFTKVGEVGGVTIIDDYGHHPVEIAAVLRAARQAVKGRVIAVHQPHRYSRLHTLFDDFCTCFNEADVVAIAEVYAAGETPIAGASRDDLVAGLIAHGHRHARAILCEDDLERLVREQARPGDMVVCLGAGTISVWANNLPARLMGRAA.

Residue 118–124 (GTHGKTT) coordinates ATP.

This sequence belongs to the MurCDEF family.

It is found in the cytoplasm. The enzyme catalyses UDP-N-acetyl-alpha-D-muramate + L-alanine + ATP = UDP-N-acetyl-alpha-D-muramoyl-L-alanine + ADP + phosphate + H(+). It functions in the pathway cell wall biogenesis; peptidoglycan biosynthesis. Functionally, cell wall formation. This chain is UDP-N-acetylmuramate--L-alanine ligase, found in Cereibacter sphaeroides (strain ATCC 17025 / ATH 2.4.3) (Rhodobacter sphaeroides).